A 253-amino-acid polypeptide reads, in one-letter code: 5'/3'-nucleotidase SurE (253 aa).

Asp-8, Asp-9, Ser-39, and Asn-92 together coordinate a divalent metal cation.

It belongs to the SurE nucleotidase family. Requires a divalent metal cation as cofactor.

Its subcellular location is the cytoplasm. It catalyses the reaction a ribonucleoside 5'-phosphate + H2O = a ribonucleoside + phosphate. It carries out the reaction a ribonucleoside 3'-phosphate + H2O = a ribonucleoside + phosphate. The enzyme catalyses [phosphate](n) + H2O = [phosphate](n-1) + phosphate + H(+). Nucleotidase with a broad substrate specificity as it can dephosphorylate various ribo- and deoxyribonucleoside 5'-monophosphates and ribonucleoside 3'-monophosphates with highest affinity to 3'-AMP. Also hydrolyzes polyphosphate (exopolyphosphatase activity) with the preference for short-chain-length substrates (P20-25). Might be involved in the regulation of dNTP and NTP pools, and in the turnover of 3'-mononucleotides produced by numerous intracellular RNases (T1, T2, and F) during the degradation of various RNAs. In Enterobacter sp. (strain 638), this protein is 5'/3'-nucleotidase SurE.